The sequence spans 138 residues: Large ribosomal subunit protein uL16 (138 aa).

A compositionally biased stretch (basic residues) spans 1–13 (MLQPKRRKYRKEQ). The disordered stretch occupies residues 1–24 (MLQPKRRKYRKEQKGRNTGKATRG).

It belongs to the universal ribosomal protein uL16 family. As to quaternary structure, part of the 50S ribosomal subunit.

Binds 23S rRNA and is also seen to make contacts with the A and possibly P site tRNAs. This is Large ribosomal subunit protein uL16 from Burkholderia multivorans (strain ATCC 17616 / 249).